A 450-amino-acid polypeptide reads, in one-letter code: Serine/threonine-protein kinase SSN3 (450 aa).

The 354-residue stretch at 40–393 (YRIIGFISSG…AAQALQSPFF (354 aa)) folds into the Protein kinase domain. Residues 46–54 (ISSGTYGRV) and lysine 71 contribute to the ATP site. Aspartate 173 functions as the Proton acceptor in the catalytic mechanism. 2 disordered regions span residues 307–341 (ASSH…NLEK) and 418–450 (QDDN…RQKE). A compositionally biased stretch (basic residues) spans 310–326 (HHNHHSHHHPHHHHGHY).

It belongs to the protein kinase superfamily. CMGC Ser/Thr protein kinase family. CDC2/CDKX subfamily. Component of the SRB8-11 complex, a regulatory module of the Mediator complex. Interacts with SSN8/FCC1. It depends on Mg(2+) as a cofactor.

The protein localises to the nucleus. It carries out the reaction L-seryl-[protein] + ATP = O-phospho-L-seryl-[protein] + ADP + H(+). It catalyses the reaction L-threonyl-[protein] + ATP = O-phospho-L-threonyl-[protein] + ADP + H(+). The enzyme catalyses [DNA-directed RNA polymerase] + ATP = phospho-[DNA-directed RNA polymerase] + ADP + H(+). In terms of biological role, component of the SRB8-11 complex. The SRB8-11 complex is a regulatory module of the Mediator complex which is itself involved in regulation of basal and activated RNA polymerase II-dependent transcription. The SRB8-11 complex may be involved in the transcriptional repression of a subset of genes regulated by Mediator. It may inhibit the association of the Mediator complex with RNA polymerase II to form the holoenzyme complex. The SRB8-11 complex phosphorylates the C-terminal domain (CTD) of the largest subunit of RNA polymerase II. Required for normal growth and secondary metabolism. This Gibberella moniliformis (Maize ear and stalk rot fungus) protein is Serine/threonine-protein kinase SSN3 (SSN3).